The primary structure comprises 87 residues: Small ribosomal subunit protein bS20 (87 aa).

Belongs to the bacterial ribosomal protein bS20 family.

Functionally, binds directly to 16S ribosomal RNA. The polypeptide is Small ribosomal subunit protein bS20 (Corynebacterium urealyticum (strain ATCC 43042 / DSM 7109)).